Here is a 412-residue protein sequence, read N- to C-terminus: Double C2-like domain-containing protein beta (412 aa).

The tract at residues 1 to 36 (MTLRRRGEKATISIQEHMAIDVCPGPIRPIKQISDY) is negatively regulates targeting to plasma membrane. The mediates interaction with DYNLT1 stretch occupies residues 1–90 (MTLRRRGEKA…EDVDQLFGAY (90 aa)). Residues 38–123 (PRFPRGLPPT…PDVDGYESDD (86 aa)) form a disordered region. The segment covering 43-58 (GLPPTAAPRAPAPPDA) has biased composition (pro residues). A compositionally biased stretch (low complexity) spans 59 to 74 (PARSPAASASPRSPSD). Over residues 95–108 (GPSPGPSPARPPAK) the composition is skewed to pro residues. The span at 112–123 (DEPDVDGYESDD) shows a compositional bias: acidic residues. C2 domains lie at 126–250 (ALGT…SICL) and 266–399 (ERGR…ERWH). 9 residues coordinate Ca(2+): Asp-157, Asp-163, Asp-218, Asp-220, Asp-297, Asp-303, Asp-357, Asp-359, and Asp-365. The interval 257-375 (DKAEDKSLEE…FIGGVVLGIN (119 aa)) is mediates interaction with STXBP3. Ser-411 carries the post-translational modification Phosphoserine.

Interacts with cytoplasmic dynein light chain DYNLT1. May interact with UNC13A; the interaction mediates targeting to the plasma membrane. Probably interacts with the SNARE (soluble N-ethylmaleimide-sensitive factor attached protein receptor) complex composed of SNAP25, STX1A and VAMP2; the interaction is calcium-dependent and competitive with SYT1. Interacts with STX4; the interaction is calcium-dependent, increased by insulin and glucose, and mediates vesicle fusion with plasma membrane in pancreatic cells and adipocytes. Interacts with STXBP3; the interaction is direct, occurs at the cell membrane and regulates glucose-stimulated insulin secretion. Requires Ca(2+) as cofactor. In terms of tissue distribution, widely expressed. Expressed in pancreatic islet cells (at protein level).

It localises to the cytoplasm. The protein localises to the cytoplasmic granule. It is found in the cell membrane. Its function is as follows. Calcium sensor which positively regulates SNARE-dependent fusion of vesicles with membranes. Binds phospholipids in a calcium-dependent manner and may act at the priming stage of fusion by modifying membrane curvature to stimulate fusion. Involved in calcium-triggered exocytosis in chromaffin cells and calcium-dependent spontaneous release of neurotransmitter in absence of action potentials in neuronal cells. Involved both in glucose-stimulated insulin secretion in pancreatic cells and insulin-dependent GLUT4 transport to the plasma membrane in adipocytes. This is Double C2-like domain-containing protein beta (Doc2b) from Mus musculus (Mouse).